The primary structure comprises 131 residues: UPF0102 protein YraN (131 aa).

Residues 1–19 are compositionally biased toward polar residues; it reads MATVPTRSGSPRQLTTKQT. The tract at residues 1-21 is disordered; it reads MATVPTRSGSPRQLTTKQTGD.

This sequence belongs to the UPF0102 family.

The protein is UPF0102 protein YraN of Escherichia coli O127:H6 (strain E2348/69 / EPEC).